The primary structure comprises 241 residues: MAPK phosphothreonine lyase (241 aa).

His106 serves as the catalytic Proton donor. Residue Lys136 is the Proton acceptor of the active site.

Belongs to the phosphothreonine lyase family.

Its subcellular location is the secreted. In terms of biological role, secreted effector that irreversibly inactivates host MAP kinases by catalyzing the dephosphorylation of the phosphothreonine residue in the pT-X-pY motif present in MAPKs, via a beta-elimination reaction leading to a dehydrobutyrine residue. In Salmonella enteritidis, this protein is MAPK phosphothreonine lyase (spvC).